The chain runs to 334 residues: Thiamine-binding periplasmic protein (334 aa).

Residues 1–23 form the signal peptide; the sequence is MRLLSLLTFSLFAVIGLAPAAQA. Residues 64-65, 166-167, tryptophan 202, and 220-223 contribute to the thiamine site; these read DG, AT, and YTTS.

The protein belongs to the bacterial solute-binding protein 1 family. In terms of assembly, the complex is composed of two ATP-binding proteins (ThiQ), two transmembrane proteins (ThiP) and a solute-binding protein (ThiB).

It is found in the periplasm. Part of the ABC transporter complex ThiBPQ involved in thiamine import. The protein is Thiamine-binding periplasmic protein (thiB) of Brucella suis biovar 1 (strain 1330).